The following is a 124-amino-acid chain: Membrane-anchored ubiquitin-fold protein 2 (124 aa).

The 67-residue stretch at 8–74 (LEIKFRLNDG…LENNKTVGDC (67 aa)) folds into the Ubiquitin-like domain. S-palmitoyl cysteine attachment occurs at residues Cys-115, Cys-117, Cys-119, and Cys-124.

Post-translationally, acylated protein. Probably modified with palmitate. As to expression, ubiquitous, but three fold higher expression in stamens.

It localises to the cell membrane. Its function is as follows. May serve as docking site to facilitate the association of other proteins to the plasma membrane. The chain is Membrane-anchored ubiquitin-fold protein 2 (MUB2) from Arabidopsis thaliana (Mouse-ear cress).